A 567-amino-acid polypeptide reads, in one-letter code: Multidrug and toxin extrusion protein 1 (567 aa).

An N-acetylmethionine modification is found at methionine 1. At methionine 1–alanine 37 the chain is on the cytoplasmic side. Phosphoserine is present on serine 18. Residues leucine 38–isoleucine 58 traverse the membrane as a helical segment. Residues serine 59–aspartate 72 are Extracellular-facing. A helical membrane pass occupies residues alanine 73 to serine 93. At serine 94–threonine 120 the chain is on the cytoplasmic side. A helical membrane pass occupies residues leucine 121–leucine 141. Residues leucine 142–arginine 152 are Extracellular-facing. The chain crosses the membrane as a helical span at residues leucine 153–leucine 173. The Cytoplasmic portion of the chain corresponds to glutamine 174–glutamine 187. The helical transmembrane segment at isoleucine 188–histidine 208 threads the bilayer. The Extracellular segment spans residues leucine 209 to serine 216. The chain crosses the membrane as a helical span at residues alanine 217–tryptophan 237. The Cytoplasmic portion of the chain corresponds to arginine 238–alanine 257. The helical transmembrane segment at serine 258–tyrosine 277 threads the bilayer. Residues glutamate 278–glutamine 295 are Extracellular-facing. A helical transmembrane segment spans residues serine 296–alanine 316. Residues asparagine 317 to serine 336 are Cytoplasmic-facing. Residues alanine 337–cysteine 357 traverse the membrane as a helical segment. Residues lysine 358–aspartate 370 are Extracellular-facing. Residues isoleucine 371–leucine 391 traverse the membrane as a helical segment. Topologically, residues alanine 392–glycine 408 are cytoplasmic. Residues alanine 409–phenylalanine 429 form a helical membrane-spanning segment. Topologically, residues alanine 430–glycine 437 are extracellular. Residues leucine 438 to alanine 458 traverse the membrane as a helical segment. Residues arginine 459–arginine 543 are Cytoplasmic-facing. The helical transmembrane segment at glycine 544–isoleucine 564 threads the bilayer. Topologically, residues arginine 565–glutamate 567 are extracellular.

This sequence belongs to the multi antimicrobial extrusion (MATE) (TC 2.A.66.1) family. As to expression, predominantly expressed in kidney and liver. Also expressed in various cells, including brain glia-like cells and capillaries, pancreatic duct cells, urinary bladder epithelium, adrenal gland cortex, heart, stomach, small intestine, thyroid gland, testes, alpha cells of the islets of Langerhans, Leydig cells, and vitamin A-storing Ito cells. Expressed in heart, stomach, small intestine, bladder, thyroid gland, adrenal gland and testes (at protein level).

It localises to the cell membrane. The protein resides in the apical cell membrane. The catalysed reaction is thiamine(out) + H(+)(in) = thiamine(in) + H(+)(out). It carries out the reaction estrone 3-sulfate(in) + H(+)(out) = estrone 3-sulfate(out) + H(+)(in). The enzyme catalyses creatinine(in) + H(+)(out) = creatinine(out) + H(+)(in). It catalyses the reaction agmatine(in) + H(+)(out) = agmatine(out) + H(+)(in). Its function is as follows. Multidrug efflux pump that functions as a H(+)/organic cation antiporter. Plays a physiological role in the excretion of cationic compounds including endogenous metabolites, drugs, toxins through the kidney and liver, into urine and bile respectively. Mediates the efflux of endogenous compounds such as creatinine, vitamin B1/thiamine, agmatine and estrone-3-sulfate. May also contribute to regulate the transport of cationic compounds in testis across the blood-testis-barrier. The polypeptide is Multidrug and toxin extrusion protein 1 (Slc47a1) (Mus musculus (Mouse)).